A 652-amino-acid chain; its full sequence is Transmembrane 9 superfamily member 12 (652 aa).

A signal peptide spans 1-20 (MFGVYRVFVLLVFVSQLCNG). Residues 21–286 (FYLPGSYMHT…LKMEGARVHW (266 aa)) are Lumenal-facing. Residues 287–307 (FSILNSLMVIFFLAGIVFVIF) form a helical membrane-spanning segment. Residues 308 to 362 (LRTVRRDLTKYEELDKEAQAQMNEELSGWKLVVGDVFREPEMSKLLCIMVGDGVR) lie on the Cytoplasmic side of the membrane. The chain crosses the membrane as a helical span at residues 363 to 383 (ITGMAVVTIVFAALGFMSPAS). Residues 384–386 (RGM) are Lumenal-facing. The helical transmembrane segment at 387-407 (LLTGMIILYLFLGIVAGYAGV) threads the bilayer. The Cytoplasmic portion of the chain corresponds to 408–426 (RLWRTVKGTSEGWRSLSWS). A helical membrane pass occupies residues 427-447 (IACFFPGIAFVILTVLNFLLW). The Lumenal segment spans residues 448–460 (SSNSTGAIPISLY). A helical membrane pass occupies residues 461-481 (FELLALWFCISVPLTLFGGFL). Topologically, residues 482–510 (GTRAEAIQFPVRTNQIPREIPERKYPSWL) are cytoplasmic. The helical transmembrane segment at 511–531 (LVLGAGTLPFGTLFIELFFIF) threads the bilayer. At 532 to 541 (SSIWLGRFYY) the chain is on the lumenal side. A helical membrane pass occupies residues 542–562 (VFGFLLIVLLLLVVVCAEVSV). At 563–580 (VLTYMHLCVEDWRWWWKA) the chain is on the cytoplasmic side. The chain crosses the membrane as a helical span at residues 581-601 (FYASGSVALYVFAYSINYLVF). At 602–613 (DLQSLSGPVSAM) the chain is on the lumenal side. Residues 614 to 634 (LYIGYSLLMAIAIMLATGTIG) traverse the membrane as a helical segment. Over 635–652 (FLTSFYFVHYLFSSVKID) the chain is Cytoplasmic. The Endoplasmic reticulum export signal signature appears at 641–646 (FVHYLF). Positions 650-652 (KID) match the Golgi retention signal motif.

It belongs to the nonaspanin (TM9SF) (TC 9.A.2) family.

Its subcellular location is the endosome membrane. The protein localises to the golgi apparatus membrane. The chain is Transmembrane 9 superfamily member 12 from Arabidopsis thaliana (Mouse-ear cress).